The chain runs to 226 residues: Fibrillarin-like rRNA/tRNA 2'-O-methyltransferase (226 aa).

S-adenosyl-L-methionine contacts are provided by residues 85 to 86 (TT), 104 to 105 (EF), 129 to 130 (DA), and 149 to 152 (DVAQ).

The protein belongs to the methyltransferase superfamily. Fibrillarin family. In terms of assembly, interacts with nop5. Component of box C/D small ribonucleoprotein (sRNP) particles that contain rpl7ae, FlpA and nop5, plus a guide RNA.

Functionally, involved in pre-rRNA and tRNA processing. Utilizes the methyl donor S-adenosyl-L-methionine to catalyze the site-specific 2'-hydroxyl methylation of ribose moieties in rRNA and tRNA. Site specificity is provided by a guide RNA that base pairs with the substrate. Methylation occurs at a characteristic distance from the sequence involved in base pairing with the guide RNA. The chain is Fibrillarin-like rRNA/tRNA 2'-O-methyltransferase from Thermococcus gammatolerans (strain DSM 15229 / JCM 11827 / EJ3).